The chain runs to 442 residues: MRLSRYFLPILKENPKEAEIVSHRLMLRSGMIRQQSAGIYSWLPIGLKVLNKVCTIIREEQNRAGANEILMPTIQSADLWRESGRYDAYGKEMLRIQDRQEREMLFGPTNEEMVTDIFRSYVRSYKDLPLNLYHIQWKFRDEVRPRFGVMRSREFLMKDAYSFDLDYEGAKMAYYRMFVSYLRTFARVGLQAIPMRADTGPIGGDLSHEFIILAETGESQVYCDRAYLDLAVPGADTDFRNDAQLTDIVTRWTTPYAATDEMHDEADWAKVKPESQVSARGIEVGHIFHFGTKYSEPMGAKVQGPDGKEHLVFMGSYGIGPSRLVAAAIEASHDDAGIIWPKAIAPFGAGIVNMKPGDEGCDGVSEKLYEALTNAGVDPLLDDKDERPGAKFATMDLIGLPTQVIVGPRGVAAGEVEVKDRKTGERQSLDIEAAINMLTAQA.

Belongs to the class-II aminoacyl-tRNA synthetase family. ProS type 2 subfamily. As to quaternary structure, homodimer.

The protein localises to the cytoplasm. The catalysed reaction is tRNA(Pro) + L-proline + ATP = L-prolyl-tRNA(Pro) + AMP + diphosphate. Its function is as follows. Catalyzes the attachment of proline to tRNA(Pro) in a two-step reaction: proline is first activated by ATP to form Pro-AMP and then transferred to the acceptor end of tRNA(Pro). This Brucella ovis (strain ATCC 25840 / 63/290 / NCTC 10512) protein is Proline--tRNA ligase.